A 270-amino-acid chain; its full sequence is Flavin-dependent thymidylate synthase (270 aa).

The 206-residue stretch at 13-218 (GFVRLVDQMG…PLAWAAFEEH (206 aa)) folds into the ThyX domain. Residues Ser59, 82-84 (RHR), and Glu90 contribute to the FAD site. DUMP-binding positions include 79 to 82 (QWFR), 90 to 94 (EISGR), and Arg157. Positions 82-92 (RHRTASVNEIS) match the ThyX motif motif. Residues 173-175 (DLH) and His179 contribute to the FAD site. Residue Arg184 participates in dUMP binding. The active-site Involved in ionization of N3 of dUMP, leading to its activation is the Arg184.

This sequence belongs to the thymidylate synthase ThyX family. In terms of assembly, homotetramer. FAD is required as a cofactor.

The catalysed reaction is dUMP + (6R)-5,10-methylene-5,6,7,8-tetrahydrofolate + NADPH + H(+) = dTMP + (6S)-5,6,7,8-tetrahydrofolate + NADP(+). The protein operates within pyrimidine metabolism; dTTP biosynthesis. In terms of biological role, catalyzes the reductive methylation of 2'-deoxyuridine-5'-monophosphate (dUMP) to 2'-deoxythymidine-5'-monophosphate (dTMP) while utilizing 5,10-methylenetetrahydrofolate (mTHF) as the methyl donor, and NADPH and FADH(2) as the reductant. The sequence is that of Flavin-dependent thymidylate synthase from Thermus thermophilus (strain ATCC 27634 / DSM 579 / HB8).